A 114-amino-acid polypeptide reads, in one-letter code: Cytochrome c oxidase subunit 4B (114 aa).

The next 3 helical transmembrane spans lie at 29–49 (QIVV…AVAT), 56–76 (FAIP…LFFF), and 89–109 (AFMI…MLLL).

This sequence belongs to the cytochrome c oxidase bacterial subunit 4 family.

It is found in the cell membrane. It catalyses the reaction 4 Fe(II)-[cytochrome c] + O2 + 8 H(+)(in) = 4 Fe(III)-[cytochrome c] + 2 H2O + 4 H(+)(out). The polypeptide is Cytochrome c oxidase subunit 4B (ctaF) (Alkalihalophilus pseudofirmus (strain ATCC BAA-2126 / JCM 17055 / OF4) (Bacillus pseudofirmus)).